The sequence spans 358 residues: Chorismate synthase (358 aa).

Position 47 (Arg47) interacts with NADP(+). FMN contacts are provided by residues 124–126 (RSS), 240–241 (NA), Gly284, 299–303 (KPIAT), and Arg325.

It belongs to the chorismate synthase family. As to quaternary structure, homotetramer. FMNH2 serves as cofactor.

It carries out the reaction 5-O-(1-carboxyvinyl)-3-phosphoshikimate = chorismate + phosphate. The protein operates within metabolic intermediate biosynthesis; chorismate biosynthesis; chorismate from D-erythrose 4-phosphate and phosphoenolpyruvate: step 7/7. Catalyzes the anti-1,4-elimination of the C-3 phosphate and the C-6 proR hydrogen from 5-enolpyruvylshikimate-3-phosphate (EPSP) to yield chorismate, which is the branch point compound that serves as the starting substrate for the three terminal pathways of aromatic amino acid biosynthesis. This reaction introduces a second double bond into the aromatic ring system. This Bacteroides thetaiotaomicron (strain ATCC 29148 / DSM 2079 / JCM 5827 / CCUG 10774 / NCTC 10582 / VPI-5482 / E50) protein is Chorismate synthase.